The following is a 788-amino-acid chain: Serine/threonine-protein kinase MARK2 (788 aa).

The tract at residues 1–46 (MSSARTPLPTLNERDTEQPTLGHLDSKPSSKSNMIRGRNSATSADE) is disordered. The segment covering 27–45 (KPSSKSNMIRGRNSATSAD) has biased composition (polar residues). Phosphoserine is present on Ser40. The Protein kinase domain occupies 53–304 (YRLLKTIGKG…LEQIMKDRWM (252 aa)). Thr58 bears the Phosphothreonine; by autocatalysis mark. ATP contacts are provided by residues 59-67 (IGKGNFAKV) and Lys82. Phosphoserine; by CaMK1 occurs at positions 91, 92, and 93. Catalysis depends on Asp175, which acts as the Proton acceptor. Thr208 carries the phosphothreonine; by LKB1 and TAOK1 modification. Ser212 is subject to Phosphoserine; by GSK3-beta. A Phosphoserine; by autocatalysis modification is found at Ser274. Thr275 is subject to Phosphothreonine; by autocatalysis. Position 294 is a phosphothreonine; by CaMK1 (Thr294). In terms of domain architecture, UBA spans 323-362 (YKDPRRTELMVSMGYTREEIQDSLVGQRYNEVMATYLLLG). The disordered stretch occupies residues 373–632 (ITLKPRPSAD…HSQGRRGASG (260 aa)). Residues Lys376 and Ser409 each carry the phosphoserine modification. Residues 418-432 (PTSNSYSKKTQSNNA) are compositionally biased toward polar residues. Basic and acidic residues predominate over residues 433 to 445 (ENKRPEEDRESGR). Ser456 bears the Phosphoserine mark. Thr467 carries the post-translational modification Phosphothreonine. The span at 467–486 (TPTPSTNSVLSTSTNRSRNS) shows a compositional bias: polar residues. Residues Ser486 and Ser493 each carry the phosphoserine modification. Over residues 495 to 504 (GQASIQNGKD) the composition is skewed to polar residues. The segment covering 511–525 (SRASTASASAAVSAA) has biased composition (low complexity). Residues Ser569, Ser571, and Ser592 each carry the phosphoserine modification. Phosphothreonine; by PKC/PRKCZ is present on Thr596. Phosphoserine occurs at positions 619 and 722. The region spanning 739–788 (TPGHEDFVQWEMEVCKLPRLSLNGVRFKRISGTSMAFKNIASKIANELKL) is the KA1 domain.

This sequence belongs to the protein kinase superfamily. CAMK Ser/Thr protein kinase family. SNF1 subfamily. As to quaternary structure, homodimer. Interacts with PAK5; leading to inhibit the protein kinase activity. Interacts with MAPT/TAU. Interacts with MTCL1 isoform 1; the interaction is direct and increases MARK2 microtubule-binding ability. Interacts (when phosphorylated at Thr-596) with YWHAZ. Interacts with YWHAB, YWHAG and YWHAQ. In terms of assembly, (Microbial infection) In case of infection, interacts with H.pylori CagA, leading to inhibit kinase activity and junctional and polarity defects. The cofactor is Mg(2+). In terms of processing, autophosphorylated. Phosphorylated at Thr-208 by STK11/LKB1 in complex with STE20-related adapter-alpha (STRADA) pseudo kinase and CAB39. Phosphorylation at Thr-208 by TAOK1 activates the kinase activity, leading to phosphorylation and detachment of MAPT/TAU from microtubules. Phosphorylation at Ser-212 by GSK3-beta (GSK3B) inhibits the kinase activity. Phosphorylation by CaMK1 promotes activity and is required to promote neurite outgrowth. Phosphorylation at Thr-596 by PRKCZ/aPKC in polarized epithelial cells inhibits the kinase activity and promotes binding to 14-3-3 protein YWHAZ, leading to relocation from cell membrane to cytoplasm. As to expression, high levels of expression in heart, brain, skeletal muscle and pancreas, lower levels observed in lung, liver and kidney.

The protein localises to the cell membrane. The protein resides in the cytoplasm. Its subcellular location is the lateral cell membrane. It localises to the cytoskeleton. It is found in the cell projection. The protein localises to the dendrite. It catalyses the reaction L-seryl-[protein] + ATP = O-phospho-L-seryl-[protein] + ADP + H(+). It carries out the reaction L-threonyl-[protein] + ATP = O-phospho-L-threonyl-[protein] + ADP + H(+). The catalysed reaction is L-seryl-[tau protein] + ATP = O-phospho-L-seryl-[tau protein] + ADP + H(+). The enzyme catalyses L-threonyl-[tau protein] + ATP = O-phospho-L-threonyl-[tau protein] + ADP + H(+). Its activity is regulated as follows. Inhibited by PAK5; inhibition is independent of the kinase activity of PAK5. Activated by phosphorylation on Thr-208. Inhibited by phosphorylation at Ser-212 and Thr-596. Inhibited by hymenialdisine. Specifically inhibited by the H.pylori CagA peptide FPLKRHDKVDDLSK that mimics host substrates and binds to the kinase substrate-binding site. Its function is as follows. Serine/threonine-protein kinase. Involved in cell polarity and microtubule dynamics regulation. Phosphorylates CRTC2/TORC2, DCX, HDAC7, KIF13B, MAP2, MAP4 and RAB11FIP2. Phosphorylates the microtubule-associated protein MAPT/TAU. Plays a key role in cell polarity by phosphorylating the microtubule-associated proteins MAP2, MAP4 and MAPT/TAU at KXGS motifs, causing detachment from microtubules, and their disassembly. Regulates epithelial cell polarity by phosphorylating RAB11FIP2. Involved in the regulation of neuronal migration through its dual activities in regulating cellular polarity and microtubule dynamics, possibly by phosphorylating and regulating DCX. Regulates axogenesis by phosphorylating KIF13B, promoting interaction between KIF13B and 14-3-3 and inhibiting microtubule-dependent accumulation of KIF13B. Also required for neurite outgrowth and establishment of neuronal polarity. Regulates localization and activity of some histone deacetylases by mediating phosphorylation of HDAC7, promoting subsequent interaction between HDAC7 and 14-3-3 and export from the nucleus. Also acts as a positive regulator of the Wnt signaling pathway, probably by mediating phosphorylation of dishevelled proteins (DVL1, DVL2 and/or DVL3). Modulates the developmental decision to build a columnar versus a hepatic epithelial cell apparently by promoting a switch from a direct to a transcytotic mode of apical protein delivery. Essential for the asymmetric development of membrane domains of polarized epithelial cells. In Homo sapiens (Human), this protein is Serine/threonine-protein kinase MARK2.